A 124-amino-acid chain; its full sequence is Large ribosomal subunit protein bL12 (124 aa).

This sequence belongs to the bacterial ribosomal protein bL12 family. As to quaternary structure, homodimer. Part of the ribosomal stalk of the 50S ribosomal subunit. Forms a multimeric L10(L12)X complex, where L10 forms an elongated spine to which 2 to 4 L12 dimers bind in a sequential fashion. Binds GTP-bound translation factors.

Forms part of the ribosomal stalk which helps the ribosome interact with GTP-bound translation factors. Is thus essential for accurate translation. The protein is Large ribosomal subunit protein bL12 of Herminiimonas arsenicoxydans.